A 77-amino-acid chain; its full sequence is ATP synthase subunit c (77 aa).

2 helical membrane-spanning segments follow: residues 13-33 and 55-75; these read IATVGYGLAAIGPGIGVGIVA and FLGIAFSEALALIGLATYFIF.

It belongs to the ATPase C chain family. In terms of assembly, F-type ATPases have 2 components, F(1) - the catalytic core - and F(0) - the membrane proton channel. F(1) has five subunits: alpha(3), beta(3), gamma(1), delta(1), epsilon(1). F(0) has three main subunits: a(1), b(2) and c(10-14). The alpha and beta chains form an alternating ring which encloses part of the gamma chain. F(1) is attached to F(0) by a central stalk formed by the gamma and epsilon chains, while a peripheral stalk is formed by the delta and b chains.

Its subcellular location is the cell membrane. Functionally, f(1)F(0) ATP synthase produces ATP from ADP in the presence of a proton or sodium gradient. F-type ATPases consist of two structural domains, F(1) containing the extramembraneous catalytic core and F(0) containing the membrane proton channel, linked together by a central stalk and a peripheral stalk. During catalysis, ATP synthesis in the catalytic domain of F(1) is coupled via a rotary mechanism of the central stalk subunits to proton translocation. Key component of the F(0) channel; it plays a direct role in translocation across the membrane. A homomeric c-ring of between 10-14 subunits forms the central stalk rotor element with the F(1) delta and epsilon subunits. This chain is ATP synthase subunit c, found in Clavibacter sepedonicus (Clavibacter michiganensis subsp. sepedonicus).